The chain runs to 543 residues: Dipeptide-binding protein DppE (543 aa).

Positions 1-22 (MKRVKKLWGMGLALGLSFALMG) are cleaved as a signal peptide. The N-palmitoyl cysteine moiety is linked to residue cysteine 23. The S-diacylglycerol cysteine moiety is linked to residue cysteine 23.

This sequence belongs to the bacterial solute-binding protein 5 family.

It localises to the cell membrane. Its function is as follows. Probably part of the ABC transporter DppBCDE involved in dipeptide transport. In Bacillus subtilis (strain 168), this protein is Dipeptide-binding protein DppE (dppE).